A 276-amino-acid chain; its full sequence is Protein TabB (276 aa).

Belongs to the transferase hexapeptide repeat family. The cofactor is pyridoxal 5'-phosphate.

In Pseudomonas amygdali pv. tabaci (Pseudomonas syringae pv. tabaci), this protein is Protein TabB (tabB).